The chain runs to 663 residues: DNA topoisomerase 4 subunit B (663 aa).

ATP contacts are provided by residues Tyr7, Asn47, Asp74, Gly114–Ala120, and Lys341. The tract at residues Arg386–Ala416 is disordered. Residues Glu387–Ser398 are compositionally biased toward basic and acidic residues. Positions Asn424–Pro538 constitute a Toprim domain. 3 residues coordinate Mg(2+): Glu430, Asp503, and Asp505.

This sequence belongs to the type II topoisomerase family. ParE type 2 subfamily. In terms of assembly, heterotetramer composed of ParC and ParE. Requires Mg(2+) as cofactor. The cofactor is Mn(2+). Ca(2+) is required as a cofactor.

The enzyme catalyses ATP-dependent breakage, passage and rejoining of double-stranded DNA.. In terms of biological role, topoisomerase IV is essential for chromosome segregation. It relaxes supercoiled DNA. Performs the decatenation events required during the replication of a circular DNA molecule. The protein is DNA topoisomerase 4 subunit B of Staphylococcus aureus (strain Mu50 / ATCC 700699).